A 385-amino-acid chain; its full sequence is Endoglucanase 1 (385 aa).

A signal peptide spans 1 to 17 (MKLVFSALASLLSGASA). Asparagine 93 and asparagine 140 each carry an N-linked (GlcNAc...) asparagine glycan. Glutamate 176 acts as the Proton donor in catalysis. N-linked (GlcNAc...) asparagine glycosylation is found at asparagine 200 and asparagine 237. Glutamate 284 (nucleophile) is an active-site residue. N-linked (GlcNAc...) asparagine glycosylation is found at asparagine 289 and asparagine 331.

The protein belongs to the glycosyl hydrolase 5 (cellulase A) family.

The enzyme catalyses Endohydrolysis of (1-&gt;4)-beta-D-glucosidic linkages in cellulose, lichenin and cereal beta-D-glucans.. The protein operates within glycan metabolism; cellulose degradation. Its function is as follows. Active towards carboxymethyl cellulose. This is Endoglucanase 1 (eg 1) from Robillarda sp. (strain Y-20).